Here is a 277-residue protein sequence, read N- to C-terminus: Large ribosomal subunit protein uL2 (277 aa).

The interval 222–277 is disordered; sequence GVAMNPVDHPHGGGEGRTSGGRHPVTPWGKPTKGKKTRSNKATDKFIMRSRHQRKK.

It belongs to the universal ribosomal protein uL2 family. As to quaternary structure, part of the 50S ribosomal subunit. Forms a bridge to the 30S subunit in the 70S ribosome.

Its function is as follows. One of the primary rRNA binding proteins. Required for association of the 30S and 50S subunits to form the 70S ribosome, for tRNA binding and peptide bond formation. It has been suggested to have peptidyltransferase activity; this is somewhat controversial. Makes several contacts with the 16S rRNA in the 70S ribosome. This Brucella ovis (strain ATCC 25840 / 63/290 / NCTC 10512) protein is Large ribosomal subunit protein uL2.